The sequence spans 320 residues: Nod factor export ATP-binding protein I (320 aa).

Residues 15 to 245 (VSATGVWKKR…LGALKILEID (231 aa)) enclose the ABC transporter domain. 47 to 54 (GTNGAGKS) serves as a coordination point for ATP.

The protein belongs to the ABC transporter superfamily. Lipooligosaccharide exporter (TC 3.A.1.102) family. As to quaternary structure, the complex is composed of two ATP-binding proteins (NodI) and two transmembrane proteins (NodJ).

The protein localises to the cell inner membrane. Part of the ABC transporter complex NodIJ involved in the export of the nodulation factors (Nod factors), the bacterial signal molecules that induce symbiosis and subsequent nodulation induction. Nod factors are LCO (lipo-chitin oligosaccharide), a modified beta-1,4-linked N-acetylglucosamine oligosaccharide. This subunit is responsible for energy coupling to the transport system. This is Nod factor export ATP-binding protein I from Azorhizobium caulinodans (strain ATCC 43989 / DSM 5975 / JCM 20966 / LMG 6465 / NBRC 14845 / NCIMB 13405 / ORS 571).